A 308-amino-acid polypeptide reads, in one-letter code: S-crystallin SL18 (308 aa).

Residues 2–80 form the GST N-terminal domain; that stretch reads PKYTLYYFNS…YLARQFGFYG (79 aa). The interval 165–205 is disordered; it reads EMRSQDSMVEPPSQKLSPELESQSSLCSERPQCGPPDPMMG. Over residues 178–191 the composition is skewed to polar residues; sequence QKLSPELESQSSLC. Residues 185–308 form the GST C-terminal domain; sequence ESQSSLCSER…YFTLRNYTDF (124 aa).

The protein belongs to the GST superfamily. Lens.

Its function is as follows. S-crystallins are structural components of squids and octopi eye lens. Contains relatively little if any GST activity. The polypeptide is S-crystallin SL18 (Nototodarus sloanii (Wellington flying squid)).